The following is a 420-amino-acid chain: MKWLLFFGALIGAGICGRDKFFGDQVFRINVRNGDEIRKLTELVNSDHLKLSVWKSPSTFDRPVDILVPSVSLLPVKSFLKSQGLDYSVTIEDLQALLDNEDEEMQHNEGIERSGDFNYGAYHPLEAIYHEMDSIATDFPELVSRVKIGETFEKRPMYVLKFSTGGGKKRPAIWLNAGIHAREWISQATAIWTARKIVTDYKKDPAITSILKKVDIFLLPVANPDGYVYTQSQNRLWRKTRSRNPGSRCVGADPNRNWNASFAGEGTSDNPCSEVYHGSHPNSEVEVKSVVDFIQKHGNFKCFIDLHSYSQLLMYPYGYTVKKAPDAEELDDVARNAAQALASLSGTKYRVGPTCTTVYPASGSSVDWAYDNGIKYAFTFELRDTGYYGFLLPASQIIPTAEETWLGLKTIMEHVRDHLY.

Positions 1-16 (MKWLLFFGALIGAGIC) are cleaved as a signal peptide. Residues 17-113 (GRDKFFGDQV…EMQHNEGIER (97 aa)) constitute a propeptide, activation peptide. 7 residues coordinate a protein: P69, V71, N118, Y122, H123, E126, and F162. Residues 121–415 (AYHPLEAIYH…LGLKTIMEHV (295 aa)) enclose the Peptidase M14 domain. H180 and E183 together coordinate Zn(2+). A disulfide bridge connects residues C249 and C272. Residue N259 is glycosylated (N-linked (GlcNAc...) asparagine). Position 307 (H307) interacts with Zn(2+). Residue E381 is the Proton donor/acceptor of the active site.

This sequence belongs to the peptidase M14 family. In terms of assembly, interacts with LXN. The cofactor is Zn(2+).

Its subcellular location is the secreted. Metalloprotease that cleaves hydrophobic C-terminal residues with a preference for -Phe, -Leu, -Ile, -Met, -Tyr and -Val. May function in peptide hormone and/or neuropeptide catabolism. The protein is Carboxypeptidase A4 (Cpa4) of Mus musculus (Mouse).